Consider the following 525-residue polypeptide: Asparagine synthetase domain-containing protein YML096W (525 aa).

The active-site For GATase activity is the Cys-2. A Glutamine amidotransferase type-2 domain is found at 2 to 209 (CGILLHYCPN…LNSNQRSHLP (208 aa)). The Asparagine synthetase domain occupies 210-523 (YEVTSEIDLN…GTDLLKENRN (314 aa)). Residues 503 to 525 (SAKMTKDGNKHGTDLLKENRNCS) form a disordered region. Residues 506 to 525 (MTKDGNKHGTDLLKENRNCS) are compositionally biased toward basic and acidic residues.

The protein localises to the cytoplasm. The sequence is that of Asparagine synthetase domain-containing protein YML096W from Saccharomyces cerevisiae (strain ATCC 204508 / S288c) (Baker's yeast).